A 744-amino-acid chain; its full sequence is Elongation factor G, mitochondrial (744 aa).

Residues 39–316 (EKIRNIGISA…AVIDYLPNPG (278 aa)) enclose the tr-type G domain. GTP is bound by residues 48–55 (AHIDSGKT), 115–119 (DTPGH), and 169–172 (NKLD). Over residues 725-735 (VRQYQETQGAS) the composition is skewed to polar residues. Positions 725-744 (VRQYQETQGASQPDKKKKKN) are disordered.

It belongs to the TRAFAC class translation factor GTPase superfamily. Classic translation factor GTPase family. EF-G/EF-2 subfamily.

It is found in the mitochondrion. It participates in protein biosynthesis; polypeptide chain elongation. Mitochondrial GTPase that catalyzes the GTP-dependent ribosomal translocation step during translation elongation. During this step, the ribosome changes from the pre-translocational (PRE) to the post-translocational (POST) state as the newly formed A-site-bound peptidyl-tRNA and P-site-bound deacylated tRNA move to the P and E sites, respectively. Catalyzes the coordinated movement of the two tRNA molecules, the mRNA and conformational changes in the ribosome. Essential during development as it acts as a retrograde signal from mitochondria to the nucleus to slow down cell proliferation if mitochondrial energy output is low. The chain is Elongation factor G, mitochondrial from Drosophila pseudoobscura pseudoobscura (Fruit fly).